We begin with the raw amino-acid sequence, 328 residues long: Solute-binding protein Bamb_6123 (328 aa).

The signal sequence occupies residues 1–26 (MTHRFPRSRTALAVALMAGFAMSAQA). Beta-D-galacturonate is bound by residues H35, E73, R89, R149, N209, and E236. Residues H35, E73, R89, R149, N209, and E236 each contribute to the beta-D-glucuronate site.

Belongs to the bacterial solute-binding protein 7 family. As to quaternary structure, the complex is comprised of an extracytoplasmic solute-binding protein and a heteromeric permease formed by two transmembrane proteins.

The protein resides in the periplasm. In terms of biological role, solute-binding protein that binds D-galacturonate and D-glucuronate (in vitro). Probably part of a tripartite ATP-independent periplasmic (TRAP) transport system that mediates solute transport into the cytoplasm. This Burkholderia ambifaria (strain ATCC BAA-244 / DSM 16087 / CCUG 44356 / LMG 19182 / AMMD) (Burkholderia cepacia (strain AMMD)) protein is Solute-binding protein Bamb_6123.